Here is a 100-residue protein sequence, read N- to C-terminus: Large ribosomal subunit protein eL14 (100 aa).

Belongs to the eukaryotic ribosomal protein eL14 family.

The chain is Large ribosomal subunit protein eL14 from Aeropyrum pernix (strain ATCC 700893 / DSM 11879 / JCM 9820 / NBRC 100138 / K1).